Here is a 348-residue protein sequence, read N- to C-terminus: Serpentine receptor class alpha-29 (348 aa).

Transmembrane regions (helical) follow at residues phenylalanine 28 to tryptophan 48, phenylalanine 108 to phenylalanine 130, glycine 145 to phenylalanine 165, isoleucine 193 to isoleucine 213, cysteine 246 to phenylalanine 266, and leucine 280 to isoleucine 300.

It belongs to the nematode receptor-like protein sra family.

Its subcellular location is the membrane. In Caenorhabditis elegans, this protein is Serpentine receptor class alpha-29 (sra-29).